The following is a 373-amino-acid chain: tRNA-specific 2-thiouridylase MnmA (373 aa).

ATP-binding positions include 12–19 and Met-38; that span reads GMSGGVDS. Residues 98-100 are interaction with target base in tRNA; the sequence is NPD. Residue Cys-103 is the Nucleophile of the active site. Residues Cys-103 and Cys-200 are joined by a disulfide bond. An ATP-binding site is contributed by Gly-127. The interval 150–152 is interaction with tRNA; sequence KDQ. Cys-200 (cysteine persulfide intermediate) is an active-site residue. The interaction with tRNA stretch occupies residues 312–313; it reads RY.

This sequence belongs to the MnmA/TRMU family.

The protein localises to the cytoplasm. The enzyme catalyses S-sulfanyl-L-cysteinyl-[protein] + uridine(34) in tRNA + AH2 + ATP = 2-thiouridine(34) in tRNA + L-cysteinyl-[protein] + A + AMP + diphosphate + H(+). Its function is as follows. Catalyzes the 2-thiolation of uridine at the wobble position (U34) of tRNA, leading to the formation of s(2)U34. The protein is tRNA-specific 2-thiouridylase MnmA of Streptococcus pyogenes serotype M2 (strain MGAS10270).